A 271-amino-acid chain; its full sequence is Integral membrane protein 2C (271 aa).

Position 41 is a phosphothreonine (T41). A helical; Signal-anchor for type II membrane protein transmembrane segment spans residues 59-79; sequence VGGVCYLSMGMVVLLMGLVFA. The BRICHOS domain occupies 140-234; that stretch reads FGGGDPADII…LCSGKDTYRL (95 aa). C167 and C226 are disulfide-bonded. N173 is a glycosylation site (N-linked (GlcNAc...) asparagine).

Belongs to the ITM2 family. Interacts with BACE1. Interacts with APP. Interacts with STMN2. Type I membrane-bound, as well as soluble, furin has a pre-eminent role in ITM2C proteolytic processing. PCSK7 and PCSK5 may also be involved although to a lesser extent. The soluble form of PCSK7 is incapable of processing ITM2C. Fails to undergo shedding by ADAM10 and intramembrane cleavage by SPPL2B.

It localises to the lysosome membrane. The protein localises to the cell membrane. Functionally, negative regulator of amyloid-beta peptide production. May inhibit the processing of APP by blocking its access to alpha- and beta-secretase. Binding to the beta-secretase-cleaved APP C-terminal fragment is negligible, suggesting that ITM2C is a poor gamma-secretase cleavage inhibitor. May play a role in TNF-induced cell death and neuronal differentiation. The chain is Integral membrane protein 2C (ITM2C) from Bos taurus (Bovine).